A 223-amino-acid polypeptide reads, in one-letter code: Neurotrophic factor BDNF precursor form (223 aa).

The N-terminal stretch at 1-5 is a signal peptide; it reads SCMKA. A propeptide spanning residues 6–114 is cleaved from the precursor; it reads APMKEVSIRG…AANMSMRVRR (109 aa). N-linked (GlcNAc...) asparagine glycosylation is present at Asn107. Cystine bridges form between Cys127–Cys194 and Cys172–Cys223.

This sequence belongs to the NGF-beta family.

Its subcellular location is the secreted. In terms of biological role, promotes the survival of neuronal populations that are all located either in the central nervous system or directly connected to it. The sequence is that of Neurotrophic factor BDNF precursor form (BDNF) from Chilabothrus striatus (Haitian boa constrictor).